We begin with the raw amino-acid sequence, 227 residues long: ATP synthase F(0) complex subunit a (227 aa).

6 helical membrane passes run 12 to 32 (PTYL…ILFP), 69 to 89 (WAVL…LGLL), 98 to 118 (QLSL…IIGM), 132 to 152 (EGTP…SLFI), 180 to 200 (FVLM…LFLL), and 202 to 222 (LLEI…LSLY).

It belongs to the ATPase A chain family. As to quaternary structure, component of the ATP synthase complex composed at least of ATP5F1A/subunit alpha, ATP5F1B/subunit beta, ATP5MC1/subunit c (homooctomer), MT-ATP6/subunit a, MT-ATP8/subunit 8, ATP5ME/subunit e, ATP5MF/subunit f, ATP5MG/subunit g, ATP5MK/subunit k, ATP5MJ/subunit j, ATP5F1C/subunit gamma, ATP5F1D/subunit delta, ATP5F1E/subunit epsilon, ATP5PF/subunit F6, ATP5PB/subunit b, ATP5PD/subunit d, ATP5PO/subunit OSCP. ATP synthase complex consists of a soluble F(1) head domain (subunits alpha(3) and beta(3)) - the catalytic core - and a membrane F(0) domain - the membrane proton channel (subunits c, a, 8, e, f, g, k and j). These two domains are linked by a central stalk (subunits gamma, delta, and epsilon) rotating inside the F1 region and a stationary peripheral stalk (subunits F6, b, d, and OSCP). Interacts with DNAJC30; interaction is direct.

It is found in the mitochondrion inner membrane. The catalysed reaction is H(+)(in) = H(+)(out). In terms of biological role, subunit a, of the mitochondrial membrane ATP synthase complex (F(1)F(0) ATP synthase or Complex V) that produces ATP from ADP in the presence of a proton gradient across the membrane which is generated by electron transport complexes of the respiratory chain. ATP synthase complex consist of a soluble F(1) head domain - the catalytic core - and a membrane F(1) domain - the membrane proton channel. These two domains are linked by a central stalk rotating inside the F(1) region and a stationary peripheral stalk. During catalysis, ATP synthesis in the catalytic domain of F(1) is coupled via a rotary mechanism of the central stalk subunits to proton translocation. With the subunit c (ATP5MC1), forms the proton-conducting channel in the F(0) domain, that contains two crucial half-channels (inlet and outlet) that facilitate proton movement from the mitochondrial intermembrane space (IMS) into the matrix. Protons are taken up via the inlet half-channel and released through the outlet half-channel, following a Grotthuss mechanism. In Salmo salar (Atlantic salmon), this protein is ATP synthase F(0) complex subunit a.